The following is a 622-amino-acid chain: DNA mismatch repair protein MutL (622 aa).

The span at 399-414 (SSQNFHPDENDYRAEE) shows a compositional bias: basic and acidic residues. The segment at 399–422 (SSQNFHPDENDYRAEEASPAEENP) is disordered.

The protein belongs to the DNA mismatch repair MutL/HexB family.

This protein is involved in the repair of mismatches in DNA. It is required for dam-dependent methyl-directed DNA mismatch repair. May act as a 'molecular matchmaker', a protein that promotes the formation of a stable complex between two or more DNA-binding proteins in an ATP-dependent manner without itself being part of a final effector complex. The protein is DNA mismatch repair protein MutL of Phocaeicola vulgatus (strain ATCC 8482 / DSM 1447 / JCM 5826 / CCUG 4940 / NBRC 14291 / NCTC 11154) (Bacteroides vulgatus).